A 345-amino-acid chain; its full sequence is Probable galacturonosyltransferase-like 3 (345 aa).

Residues 1-7 (MSSLRLR) are Cytoplasmic-facing. A helical; Signal-anchor for type II membrane protein membrane pass occupies residues 8-28 (LCLLLLLPITISCVTVTLTDL). Residues 29–345 (PAFREAPAFR…FRYSPLISDS (317 aa)) lie on the Lumenal side of the membrane. N197 carries an N-linked (GlcNAc...) asparagine glycan.

Belongs to the glycosyltransferase 8 family.

Its subcellular location is the golgi apparatus membrane. It participates in glycan metabolism; pectin biosynthesis. Its function is as follows. May be involved in pectin and/or xylans biosynthesis in cell walls. This Arabidopsis thaliana (Mouse-ear cress) protein is Probable galacturonosyltransferase-like 3 (GATL3).